The following is a 318-amino-acid chain: Aldehyde oxidoreductase FAD-binding subunit PaoB (318 aa).

Residues 1-223 (MKAFTYERVN…VAVTLPPPLG (223 aa)) enclose the FAD-binding PCMH-type domain. FAD contacts are provided by residues 26–34 (KFIAGGTNL) and Thr108. Residues Cys119, Cys129, Cys138, and Cys157 each contribute to the [4Fe-4S] cluster site. Positions 164, 213, and 230 each coordinate FAD.

As to quaternary structure, heterotrimer composed of PaoA, PaoB and PaoC. FAD is required as a cofactor. The cofactor is [4Fe-4S] cluster.

It localises to the periplasm. It carries out the reaction an aldehyde + A + H2O = a carboxylate + AH2 + H(+). The complex requires PaoD for activity. Functionally, oxidizes aldehydes to the corresponding carboxylic acids with a preference for aromatic aldehydes. It might play a role in the detoxification of aldehydes to avoid cell damage. This is Aldehyde oxidoreductase FAD-binding subunit PaoB from Escherichia coli (strain K12).